An 894-amino-acid polypeptide reads, in one-letter code: Alanine--tRNA ligase (894 aa).

Zn(2+) contacts are provided by His-587, His-591, Cys-691, and His-695. The disordered stretch occupies residues 739 to 758; it reads AEGDRAAEEAKGRLQEERDA.

Belongs to the class-II aminoacyl-tRNA synthetase family. It depends on Zn(2+) as a cofactor.

The protein localises to the cytoplasm. The enzyme catalyses tRNA(Ala) + L-alanine + ATP = L-alanyl-tRNA(Ala) + AMP + diphosphate. In terms of biological role, catalyzes the attachment of alanine to tRNA(Ala) in a two-step reaction: alanine is first activated by ATP to form Ala-AMP and then transferred to the acceptor end of tRNA(Ala). Also edits incorrectly charged Ser-tRNA(Ala) and Gly-tRNA(Ala) via its editing domain. The protein is Alanine--tRNA ligase of Cenarchaeum symbiosum (strain A).